Here is a 146-residue protein sequence, read N- to C-terminus: Large ribosomal subunit protein uL15 (146 aa).

The interval M1–L61 is disordered. Over residues T30–K39 the composition is skewed to basic residues.

It belongs to the universal ribosomal protein uL15 family. In terms of assembly, part of the 50S ribosomal subunit.

In terms of biological role, binds to the 23S rRNA. This chain is Large ribosomal subunit protein uL15, found in Geotalea uraniireducens (strain Rf4) (Geobacter uraniireducens).